The sequence spans 397 residues: Phosphoglycerate kinase (397 aa).

Residues 21-23 (DFN), Arg37, 60-63 (HLGR), Arg119, and Arg152 contribute to the substrate site. ATP-binding positions include Lys202, Gly294, Glu325, and 351–354 (GGDS).

This sequence belongs to the phosphoglycerate kinase family. As to quaternary structure, monomer.

It localises to the cytoplasm. It catalyses the reaction (2R)-3-phosphoglycerate + ATP = (2R)-3-phospho-glyceroyl phosphate + ADP. Its pathway is carbohydrate degradation; glycolysis; pyruvate from D-glyceraldehyde 3-phosphate: step 2/5. The sequence is that of Phosphoglycerate kinase from Pseudothermotoga lettingae (strain ATCC BAA-301 / DSM 14385 / NBRC 107922 / TMO) (Thermotoga lettingae).